We begin with the raw amino-acid sequence, 206 residues long: Ribosomal RNA small subunit methyltransferase G (206 aa).

S-adenosyl-L-methionine is bound by residues Gly73, Leu78, Val124–Glu125, and Arg139.

This sequence belongs to the methyltransferase superfamily. RNA methyltransferase RsmG family.

It localises to the cytoplasm. It carries out the reaction guanosine(527) in 16S rRNA + S-adenosyl-L-methionine = N(7)-methylguanosine(527) in 16S rRNA + S-adenosyl-L-homocysteine. In terms of biological role, specifically methylates the N7 position of guanine in position 527 of 16S rRNA. The sequence is that of Ribosomal RNA small subunit methyltransferase G from Photorhabdus laumondii subsp. laumondii (strain DSM 15139 / CIP 105565 / TT01) (Photorhabdus luminescens subsp. laumondii).